The primary structure comprises 331 residues: Biotin synthase (331 aa).

Residues 40–269 enclose the Radical SAM core domain; it reads YRVQLASLLS…HARVRLSAGR (230 aa). Cys-55, Cys-59, and Cys-62 together coordinate [4Fe-4S] cluster. Residues Cys-100, Cys-132, Cys-192, and Arg-264 each contribute to the [2Fe-2S] cluster site.

This sequence belongs to the radical SAM superfamily. Biotin synthase family. In terms of assembly, homodimer. The cofactor is [4Fe-4S] cluster. It depends on [2Fe-2S] cluster as a cofactor.

The enzyme catalyses (4R,5S)-dethiobiotin + (sulfur carrier)-SH + 2 reduced [2Fe-2S]-[ferredoxin] + 2 S-adenosyl-L-methionine = (sulfur carrier)-H + biotin + 2 5'-deoxyadenosine + 2 L-methionine + 2 oxidized [2Fe-2S]-[ferredoxin]. It functions in the pathway cofactor biosynthesis; biotin biosynthesis; biotin from 7,8-diaminononanoate: step 2/2. Catalyzes the conversion of dethiobiotin (DTB) to biotin by the insertion of a sulfur atom into dethiobiotin via a radical-based mechanism. The sequence is that of Biotin synthase from Synechococcus sp. (strain CC9605).